The chain runs to 96 residues: Putative pterin-4-alpha-carbinolamine dehydratase (96 aa).

This sequence belongs to the pterin-4-alpha-carbinolamine dehydratase family.

It catalyses the reaction (4aS,6R)-4a-hydroxy-L-erythro-5,6,7,8-tetrahydrobiopterin = (6R)-L-erythro-6,7-dihydrobiopterin + H2O. The protein is Putative pterin-4-alpha-carbinolamine dehydratase of Prochlorococcus marinus (strain MIT 9303).